Consider the following 255-residue polypeptide: tRNA (guanine-N(7)-)-methyltransferase (255 aa).

Glu-86, Glu-111, Asp-138, and Asp-161 together coordinate S-adenosyl-L-methionine. Asp-161 is an active-site residue. Substrate-binding positions include Lys-165, Asp-197, and 234-237 (TKFE).

Belongs to the class I-like SAM-binding methyltransferase superfamily. TrmB family.

It catalyses the reaction guanosine(46) in tRNA + S-adenosyl-L-methionine = N(7)-methylguanosine(46) in tRNA + S-adenosyl-L-homocysteine. Its pathway is tRNA modification; N(7)-methylguanine-tRNA biosynthesis. Catalyzes the formation of N(7)-methylguanine at position 46 (m7G46) in tRNA. The sequence is that of tRNA (guanine-N(7)-)-methyltransferase from Pasteurella multocida (strain Pm70).